The primary structure comprises 164 residues: UPF0262 protein Xaut_1232 (164 aa).

Belongs to the UPF0262 family.

This chain is UPF0262 protein Xaut_1232, found in Xanthobacter autotrophicus (strain ATCC BAA-1158 / Py2).